We begin with the raw amino-acid sequence, 470 residues long: Aromatic amino acid aminotransferase C569.07 (470 aa).

Belongs to the class-I pyridoxal-phosphate-dependent aminotransferase family. Requires pyridoxal 5'-phosphate as cofactor.

It localises to the cytoplasm. The enzyme catalyses an aromatic L-alpha-amino acid + 2-oxoglutarate = an aromatic oxo-acid + L-glutamate. Has aromatic amino acid transaminase activity. In Schizosaccharomyces pombe (strain 972 / ATCC 24843) (Fission yeast), this protein is Aromatic amino acid aminotransferase C569.07.